The chain runs to 499 residues: Glycerol kinase (499 aa).

Threonine 13 provides a ligand contact to ADP. Residues threonine 13, threonine 14, and serine 15 each contribute to the ATP site. A sn-glycerol 3-phosphate-binding site is contributed by threonine 13. Arginine 17 is an ADP binding site. Sn-glycerol 3-phosphate is bound by residues arginine 83, glutamate 84, tyrosine 135, and aspartate 244. Glycerol-binding residues include arginine 83, glutamate 84, tyrosine 135, aspartate 244, and glutamine 245. ADP contacts are provided by threonine 266 and glycine 309. The ATP site is built by threonine 266, glycine 309, glutamine 313, and glycine 410. ADP contacts are provided by glycine 410 and asparagine 414.

This sequence belongs to the FGGY kinase family.

It carries out the reaction glycerol + ATP = sn-glycerol 3-phosphate + ADP + H(+). It participates in polyol metabolism; glycerol degradation via glycerol kinase pathway; sn-glycerol 3-phosphate from glycerol: step 1/1. Its activity is regulated as follows. Inhibited by fructose 1,6-bisphosphate (FBP). Functionally, key enzyme in the regulation of glycerol uptake and metabolism. Catalyzes the phosphorylation of glycerol to yield sn-glycerol 3-phosphate. The polypeptide is Glycerol kinase (Paraburkholderia xenovorans (strain LB400)).